A 48-amino-acid polypeptide reads, in one-letter code: Large ribosomal subunit protein eL40 (48 aa).

Belongs to the eukaryotic ribosomal protein eL40 family.

The polypeptide is Large ribosomal subunit protein eL40 (Methanocella arvoryzae (strain DSM 22066 / NBRC 105507 / MRE50)).